The following is an 810-amino-acid chain: Oligoxyloglucan-reducing end-specific xyloglucanase (810 aa).

The signal sequence occupies residues 1 to 28; it reads MRAKNGPGSWLALTAIATSLNTLALAAA. An N-linked (GlcNAc...) asparagine glycan is attached at N32. D66 serves as the catalytic Nucleophile. The stretch at 126–135 is one BNR 1 repeat; it reads FVSQDRGATF. N-linked (GlcNAc...) asparagine glycosylation is present at N188. Residues 226 to 236 form a BNR 2 repeat; sequence YVTRDSGESWE. Residues N298, N312, and N321 are each glycosylated (N-linked (GlcNAc...) asparagine). The BNR 3 repeat unit spans residues 359-369; sequence YLSHDGGKSWK. N455 carries an N-linked (GlcNAc...) asparagine glycan. D498 (proton donor) is an active-site residue. N-linked (GlcNAc...) asparagine glycosylation is present at N544. A BNR 4 repeat occupies 554-564; sequence YSADGGSSWTK. Residues N573 and N612 are each glycosylated (N-linked (GlcNAc...) asparagine). A BNR 5 repeat occupies 617 to 626; that stretch reads YVTTDLGQTW. N638 carries an N-linked (GlcNAc...) asparagine glycan. BNR repeat units follow at residues 658 to 667, 705 to 716, and 759 to 769; these read YLSRDGGLSY, YHTRNFGKKWTK, and YRSDDNGKTWV.

The protein belongs to the glycosyl hydrolase 74 family.

The protein resides in the secreted. The catalysed reaction is Hydrolysis of cellobiose from the reducing end of xyloglucans consisting of a beta-(1-&gt;4)-linked glucan carrying alpha-D-xylosyl groups on O-6 of the glucose residues. To be a substrate, the first residue must be unsubstituted, the second residue may bear a xylosyl group, whether further glycosylated or not, and the third residue, which becomes the new terminus by the action of the enzyme, is preferably xylosylated, but this xylose residue must not be further substituted.. Its function is as follows. Oligoxyloglucan-reducing end-specific xyloglucanase involved in degradation of xyloglucans. Releases the first two glycosyl segments from oligoxyloglucans. Active against cotton xyloglucan, tamarind xyloglucan and tamarind xyloglucan oligomers. This is Oligoxyloglucan-reducing end-specific xyloglucanase (xgcA) from Emericella nidulans (strain FGSC A4 / ATCC 38163 / CBS 112.46 / NRRL 194 / M139) (Aspergillus nidulans).